Reading from the N-terminus, the 696-residue chain is Potassium voltage-gated channel subfamily KQT member 4 (696 aa).

The interval 1-20 (MAEAPPRRLGLGPPPGDAPR) is disordered. Over 1 to 97 (MAEAPPRRLG…VYNVLERPRG (97 aa)) the chain is Cytoplasmic. Arg-94 contributes to the a 1,2-diacyl-sn-glycero-3-phospho-(1D-myo-inositol-4,5-bisphosphate) binding site. Residues 98–119 (WAFVYHVFIFLLVFSCLVLSVL) form a helical membrane-spanning segment. The Extracellular portion of the chain corresponds to 120-130 (STIQEHQELAN). A helical transmembrane segment spans residues 131–153 (ECLLILEFVMIVVFGLEYIIRVW). Topologically, residues 154–169 (SAGCCCRYRGWQGRFR) are cytoplasmic. The helical transmembrane segment at 170–192 (FARKPFCVIDFIVFVASVAVIAA) threads the bilayer. Lys-173 is an a 1,2-diacyl-sn-glycero-3-phospho-(1D-myo-inositol-4,5-bisphosphate) binding site. Topologically, residues 193 to 203 (GTQGNIFATSA) are extracellular. A helical; Voltage-sensor transmembrane segment spans residues 204–224 (LRSMRFLQILRMVRMDRRGGT). A 1,2-diacyl-sn-glycero-3-phospho-(1D-myo-inositol-4,5-bisphosphate) contacts are provided by Arg-220, Arg-221, Lys-226, and Ser-236. The Cytoplasmic portion of the chain corresponds to 225-236 (WKLLGSVVYAHS). Residues 237-259 (KELITAWYIGFLVLIFASFLVYL) traverse the membrane as a helical segment. Over 260 to 271 (AEKDANSDFSSY) the chain is Extracellular. The segment at residues 272 to 293 (ADSLWWGTITLTTIGYGDKTPH) is an intramembrane region (pore-forming). Residue Thr-294 is a topological domain, extracellular. Residues 295 to 323 (WLGRVLAAGFALLGISFFALPAGILGSGF) traverse the membrane as a helical segment. Residues 324 to 696 (ALKVQEQHRQ…ISRSVSTNMD (373 aa)) lie on the Cytoplasmic side of the membrane. His-331 and Lys-334 together coordinate a 1,2-diacyl-sn-glycero-3-phospho-(1D-myo-inositol-4,5-bisphosphate). The interaction with CALM stretch occupies residues 343–352 (AANLIQAAWR). The segment at 445–484 (SSQKRTGPSKQHLAPPPIPTSPSSEQVGEASSPSKVQKSW) is disordered. Residues 465–484 (SPSSEQVGEASSPSKVQKSW) show a composition bias toward polar residues. The segment at 536 to 550 (RSVRILKFLVAKRKF) is interaction with CALM. Positions 547-651 (KRKFKETLRP…SRCLRSGTSA (105 aa)) are C-terminal assembly domain (tetramerization). The segment at 589–609 (GRGPGDRKTREKGDKGPSDTE) is disordered. Positions 592–606 (PGDRKTREKGDKGPS) are enriched in basic and acidic residues. Positions 610–645 (AVDEISMMGRVVKVEKQVQSIEHKLDLLLGFYSRCL) form a coiled coil.

The protein belongs to the potassium channel family. KQT (TC 1.A.1.15) subfamily. Kv7.4/KCNQ4 sub-subfamily. In terms of assembly, homotetramer. Interacts (via C-terminus) with calmodulin; forms a heterooctameric structure (with 4:4 KCNQ1:CALM stoichiometry); the interaction is calcium-independent, constitutive, participates in the proper assembly of a functional channel. The interaction with calcium-free CALM controls channel trafficking whereas interaction with calcium-bound CALM regulates channel gating. May form a functional heteromultimeric channel with KCNQ3. Interacts with HSP90AB1; promotes cell surface expression of KCNQ4. As to expression, in the inner ear expressed in the outer sensory hair cells of the cochlea and in type I hair cells of the vestibular organs. Also expressed in the postsynaptic membrane of the calyx nerve endings innervating type I cells. In the brain expressed in neurons of many, but not all, nuclei of the central auditory pathway. Absent from most other brain regions.

Its subcellular location is the basal cell membrane. The catalysed reaction is K(+)(in) = K(+)(out). Two molecules of phosphatidylinositol-4,5-bisphosphate (PIP2-I and PIP2-II) are essential to activate KCNQ4 channel by inducing the coupling of the voltage-sensing domain (VSD) and the pore-forming domain (PD). Upon channel activation, PIP2-I and PIP2-II disrupt the VSD-calmodulin/CALM interaction, causing the release of CALM from the VSD which triggers the opening of the gate. Calcium suppresses KCNQ4 channel current through calcium-bound CALM C-terminus. Therefore CALM acts as calcium sensor that controls channel activity. Functionally, pore-forming subunit of the voltage-gated potassium (Kv) channel involved in the regulation of sensory cells excitability in the cochlea. KCNQ4/Kv7.4 channel is composed of 4 pore-forming subunits assembled as tetramers. Promotes the outflow of potassium ions in the repolarization phase of action potential which plays a role in regulating membrane potential of excitable cells. The channel conducts a slowly activating and deactivating current. Current often shows some inward rectification at positive potentials. Channel may be selectively permeable in vitro to other cations besides potassium, in decreasing order of affinity K(+) = Rb(+) &gt; Cs(+) &gt; Na(+). Important for normal physiological function of inner ear such as sensory perception of sound. This Mus musculus (Mouse) protein is Potassium voltage-gated channel subfamily KQT member 4.